The primary structure comprises 445 residues: Histamine H3 receptor (445 aa).

The Extracellular segment spans residues 1–40 (MERAPPDGLMNASGALAGEAAAAAGGARTFSAAWTAVLAA). Asn11 carries N-linked (GlcNAc...) asparagine glycosylation. Residues 41–61 (LMALLIVATVLGNALVMLAFV) form a helical membrane-spanning segment. Residues 62–71 (ADSSLRTQNN) are Cytoplasmic-facing. The helical transmembrane segment at 72 to 92 (FFLLNLAISDFLVGVFCIPLY) threads the bilayer. Residues 93–109 (VPYVLTGRWTFGRGLCK) lie on the Extracellular side of the membrane. A disulfide bond links Cys108 and Cys189. Residues 110–130 (LWLVVDYLLCTSSVFNIVLIS) traverse the membrane as a helical segment. At 131–157 (YDRFLSVTRAVSYRAQQGDTRRAVRKM) the chain is on the cytoplasmic side. Residues 158-178 (VLVWVLAFLLYGPAILSWEYL) traverse the membrane as a helical segment. The Extracellular segment spans residues 179–197 (SGGSSIPEGHCYAEFFYNW). Residues 198–218 (YFLITASTLEFFTPFLSVTFF) traverse the membrane as a helical segment. At 219-359 (NLSIYLNIQR…LSRDKKVAKS (141 aa)) the chain is on the cytoplasmic side. Disordered regions lie at residues 236-264 (GGAREAGPDPLPEAQSSPPQPPPGCWGCW) and 288-336 (AGEA…LEKR). Residues 299–312 (AAASPTSSSGSSSR) show a composition bias toward low complexity. A helical transmembrane segment spans residues 360–380 (LAIIVSIFGLCWAPYTLLMII). The Extracellular segment spans residues 381 to 398 (RAACHGHCVPDYWYETSF). A helical transmembrane segment spans residues 399 to 419 (WLLWANSAVNPVLYPLCHYSF). Residues 420–445 (RRAFTKLLCPQKLKVQPHSSLEHCWK) lie on the Cytoplasmic side of the membrane. Ser439 bears the Phosphoserine mark.

It belongs to the G-protein coupled receptor 1 family. Expressed widely and abundantly throughout the brain. Highly expressed in discrete neuronal populations such as pyramidal cells in cerebral cortex or cerebellar Purkinje cells.

Its subcellular location is the cell membrane. Functionally, the H3 subclass of histamine receptors could mediate the histamine signals in CNS and peripheral nervous system. Signals through the inhibition of adenylate cyclase and displays high constitutive activity (spontaneous activity in the absence of agonist). In Cavia porcellus (Guinea pig), this protein is Histamine H3 receptor (HRH3).